The sequence spans 282 residues: Undecaprenyl-diphosphatase (282 aa).

Transmembrane regions (helical) follow at residues 51 to 71 (TLVAVLLYFWKDIFIIVAAVI), 87 to 107 (MGWMIVAGTIPIVIFGKLFET), 115 to 135 (SLYWISGSLIGLAIILFLAEG), 191 to 211 (ATAARFSFLLSLPAVFAAGLY), 229 to 249 (NILVATLVAGIVGYASIAFLL), and 259 to 279 (IFIAYRLVAGTAILYLVATGV).

Belongs to the UppP family.

The protein resides in the cell inner membrane. The enzyme catalyses di-trans,octa-cis-undecaprenyl diphosphate + H2O = di-trans,octa-cis-undecaprenyl phosphate + phosphate + H(+). Its function is as follows. Catalyzes the dephosphorylation of undecaprenyl diphosphate (UPP). Confers resistance to bacitracin. The protein is Undecaprenyl-diphosphatase of Pelodictyon phaeoclathratiforme (strain DSM 5477 / BU-1).